Here is a 476-residue protein sequence, read N- to C-terminus: Bifunctional protein HldE (476 aa).

Residues 1-320 (MQNPHIPSFA…RAVHQEGGSG (320 aa)) are ribokinase. 196-199 (NLSE) is a binding site for ATP. Aspartate 265 is an active-site residue. The tract at residues 345-476 (FTNGCFDIIH…KIVERIREKD (132 aa)) is cytidylyltransferase.

The protein in the N-terminal section; belongs to the carbohydrate kinase PfkB family. It in the C-terminal section; belongs to the cytidylyltransferase family. In terms of assembly, homodimer.

It catalyses the reaction D-glycero-beta-D-manno-heptose 7-phosphate + ATP = D-glycero-beta-D-manno-heptose 1,7-bisphosphate + ADP + H(+). The catalysed reaction is D-glycero-beta-D-manno-heptose 1-phosphate + ATP + H(+) = ADP-D-glycero-beta-D-manno-heptose + diphosphate. It participates in nucleotide-sugar biosynthesis; ADP-L-glycero-beta-D-manno-heptose biosynthesis; ADP-L-glycero-beta-D-manno-heptose from D-glycero-beta-D-manno-heptose 7-phosphate: step 1/4. Its pathway is nucleotide-sugar biosynthesis; ADP-L-glycero-beta-D-manno-heptose biosynthesis; ADP-L-glycero-beta-D-manno-heptose from D-glycero-beta-D-manno-heptose 7-phosphate: step 3/4. In terms of biological role, catalyzes the phosphorylation of D-glycero-D-manno-heptose 7-phosphate at the C-1 position to selectively form D-glycero-beta-D-manno-heptose-1,7-bisphosphate. Catalyzes the ADP transfer from ATP to D-glycero-beta-D-manno-heptose 1-phosphate, yielding ADP-D-glycero-beta-D-manno-heptose. The polypeptide is Bifunctional protein HldE (Alcanivorax borkumensis (strain ATCC 700651 / DSM 11573 / NCIMB 13689 / SK2)).